We begin with the raw amino-acid sequence, 161 residues long: Photosystem I reaction center subunit XI (161 aa).

The next 2 helical transmembrane spans lie at Leu84–Val104 and Phe126–Glu146.

It belongs to the PsaL family.

It localises to the cellular thylakoid membrane. The polypeptide is Photosystem I reaction center subunit XI (Trichodesmium erythraeum (strain IMS101)).